The sequence spans 268 residues: Protein MGF 300-1L (268 aa).

Residues 1-175 lie on the Cytoplasmic side of the membrane; sequence MVSLTTCCLK…QTFKTFYAKN (175 aa). Residues 176-193 form a helical membrane-spanning segment; it reads YSLSTLYCIFLAIYYKLY. The Extracellular segment spans residues 194-268; that stretch reads TALRKMVKIY…MYAFSQNDYW (75 aa). Asparagine 227 carries an N-linked (GlcNAc...) asparagine; by host glycan.

The protein belongs to the asfivirus MGF 300 family.

It localises to the host membrane. Functionally, plays a role in virus cell tropism, and may be required for efficient virus replication in macrophages. This African swine fever virus (strain Badajoz 1971 Vero-adapted) (Ba71V) protein is Protein MGF 300-1L.